A 472-amino-acid chain; its full sequence is POU domain, class 5, transcription factor 1 (472 aa).

Disordered regions lie at residues 127–154 and 187–255; these read MPSE…YHLT and ISQA…LTTE. Residues 220 to 234 are compositionally biased toward polar residues; the sequence is TAQNIPSAQAQSAPR. Positions 235 to 245 are enriched in low complexity; the sequence is SSGSSSGGCSN. Positions 246–255 are enriched in acidic residues; that stretch reads SEEEETLTTE. A POU-specific domain is found at 249-323; sequence EETLTTEDLE…LLQRWLNEAE (75 aa). The segment at residues 343-402 is a DNA-binding region (homeobox); it reads KRKRRTSLEGTVRSALESYFVKCPKPNTLEITHISDDLGLERDVVRVWFCNRRQKGKRLA.

It belongs to the POU transcription factor family. Class-7 subfamily.

The protein localises to the nucleus. In terms of biological role, involved in early development of embryos, especially in the process of gastrulation. May play an important role in establishing and specifying rhombomeric segments. Seems to be required to maintain the cells in a highly undifferentiated state. In contrast to POU2, T-POU2 lacks DNA-binding activity because of its incomplete pou domain structure. Overexpression of POU2 does not have any effect on development, whereas overexpression of t-POU2 causes developmental retardation or arrest before gastrulation. The sequence is that of POU domain, class 5, transcription factor 1 (pou5f1) from Danio rerio (Zebrafish).